Here is a 145-residue protein sequence, read N- to C-terminus: Brain and acute leukemia cytoplasmic protein (145 aa).

The N-myristoyl glycine moiety is linked to residue Gly-2. A lipid anchor (S-palmitoyl cysteine) is attached at Cys-3. The interaction with CAMK2A stretch occupies residues 3 to 35 (CGGSRADAIEPRYYESWTRETESTWLTYTDSDA). Disordered stretches follow at residues 36–56 (LPSA…AGVL) and 87–109 (CPNS…WATE). Polar residues predominate over residues 87–105 (CPNSQNLSSGPLTQKQNGL).

Interacts with CAMK2A. Palmitoylation and myristoylation target the protein to the lipid rafts. As to expression, at the mRNA level, predominantly expressed in the brain. At the protein level, mainly expressed in muscle tissues. In skeletal muscles, expressed in cranial and facial muscles, muscles of the neck, back, thoracic wall, and thigh. Also found in the contractile myoepithelial cell layer of salivary glands. In smooth muscles, expressed in the gastric wall, uterus, urinary bladder, as well as in the muscular lining around seminiferous tubules, prostatic ducts, epididymis, vas deferens, walls of small blood vessels in the dermis, and fascial layers between muscle fibers, brain, and around the spinal cord. Strongly expressed in myocardium. High expression levels are observed in placental spongiotrophoblast and adjacent myometrium. Also expressed in bone marrow hematopoietic cells. In the mature thymus, expressed in rare scattered cells. Weakly expressed in the brain neuropil, particularly near the hippocampus, and spinal cord white matter. Not detected in skin keratinocytes or lung (at protein level).

It is found in the cytoplasm. The protein resides in the synapse. Its subcellular location is the synaptosome. It localises to the membrane raft. The protein localises to the postsynaptic density. Functionally, may play a synaptic role at the postsynaptic lipid rafts possibly through interaction with CAMK2A. The polypeptide is Brain and acute leukemia cytoplasmic protein (Baalc) (Mus musculus (Mouse)).